A 177-amino-acid chain; its full sequence is MKYTILSLVAGALISCSAMAENTLTVKMNDALSSGTGENIGEITVSETPYGLLFTPHLNGLTPGIHGFHVHTNPSCMPGMKDGKEVPALMAGGHLDPEKTGKHLGPYNDKGHLGDLPGLVVNADGTATYPLLAPRLKSLSELKGHSLMIHKGGDNYSDKPAPLGGGGARFACGVIEK.

The N-terminal stretch at 1–20 (MKYTILSLVAGALISCSAMA) is a signal peptide. Cu cation-binding residues include H69, H71, and H94. C76 and C172 are disulfide-bonded. H94, H103, H112, and D115 together coordinate Zn(2+). Cu cation is bound at residue H150.

The protein belongs to the Cu-Zn superoxide dismutase family. Monomer. The cofactor is Cu cation. It depends on Zn(2+) as a cofactor.

Its subcellular location is the periplasm. The enzyme catalyses 2 superoxide + 2 H(+) = H2O2 + O2. Functionally, destroys radicals which are normally produced within the cells and which are toxic to biological systems. This Salmonella typhimurium (strain 4/74) protein is Superoxide dismutase [Cu-Zn] 1 (sodC1).